An 89-amino-acid polypeptide reads, in one-letter code: Small ribosomal subunit protein uS14A (89 aa).

The protein belongs to the universal ribosomal protein uS14 family. As to quaternary structure, part of the 30S ribosomal subunit. Contacts proteins S3 and S10.

Functionally, binds 16S rRNA, required for the assembly of 30S particles and may also be responsible for determining the conformation of the 16S rRNA at the A site. The polypeptide is Small ribosomal subunit protein uS14A (Oceanobacillus iheyensis (strain DSM 14371 / CIP 107618 / JCM 11309 / KCTC 3954 / HTE831)).